Here is a 161-residue protein sequence, read N- to C-terminus: Putative 4-hydroxy-4-methyl-2-oxoglutarate aldolase (161 aa).

Substrate-binding positions include 75 to 78 and Arg97; that span reads GDQL. Asp98 is a binding site for a divalent metal cation.

This sequence belongs to the class II aldolase/RraA-like family. As to quaternary structure, homotrimer. A divalent metal cation is required as a cofactor.

The enzyme catalyses 4-hydroxy-4-methyl-2-oxoglutarate = 2 pyruvate. It carries out the reaction oxaloacetate + H(+) = pyruvate + CO2. Catalyzes the aldol cleavage of 4-hydroxy-4-methyl-2-oxoglutarate (HMG) into 2 molecules of pyruvate. Also contains a secondary oxaloacetate (OAA) decarboxylase activity due to the common pyruvate enolate transition state formed following C-C bond cleavage in the retro-aldol and decarboxylation reactions. This Vibrio cholerae serotype O1 (strain ATCC 39315 / El Tor Inaba N16961) protein is Putative 4-hydroxy-4-methyl-2-oxoglutarate aldolase.